The following is a 39-amino-acid chain: uncharacterized protein (39 aa).

The protein belongs to the orthopoxvirus A30.5 protein family.

This is an uncharacterized protein from Bos taurus (Bovine).